Consider the following 454-residue polypeptide: Exopolyphosphatase PRUNE1 (454 aa).

M1 is subject to N-acetylmethionine. Residues D28, D30, D106, and D179 each contribute to the Mn(2+) site. A DHH motif motif is present at residues 106 to 108 (DHH). The interval 394-421 (SLIAGLSQDDEDPPLPPTPMNSLVDECP) is essential for homodimerization. Positions 398-421 (GLSQDDEDPPLPPTPMNSLVDECP) are disordered. S400 carries the phosphoserine modification. Residue T411 is modified to Phosphothreonine. The residue at position 415 (S415) is a Phosphoserine.

It belongs to the PPase class C family. Prune subfamily. Homooligomer. Able to homodimerize via its C-terminal domain. Interacts with NME1. Interacts with GSK3; at focal adhesion complexes where paxillin and vinculin are colocalized. Interacts with alpha and beta tubulin. Mn(2+) serves as cofactor.

The protein resides in the cytoplasm. Its subcellular location is the nucleus. It is found in the cell junction. The protein localises to the focal adhesion. The enzyme catalyses diphosphate + H2O = 2 phosphate + H(+). Its activity is regulated as follows. Activated by magnesium ions and inhibited by manganese ions. Inhibited by dipyridamole, moderately sensitive to IBMX and inhibited by vinpocetine. In terms of biological role, phosphodiesterase (PDE) that has higher activity toward cAMP than cGMP, as substrate. Plays a role in cell proliferation, migration and differentiation, and acts as a negative regulator of NME1. Plays a role in the regulation of neurogenesis. Involved in the regulation of microtubule polymerization. The polypeptide is Exopolyphosphatase PRUNE1 (Prune1) (Rattus norvegicus (Rat)).